An 893-amino-acid chain; its full sequence is Protein translocase subunit SecA (893 aa).

Residues Gln87, 105-109, and Asp512 each bind ATP; that span reads GEGKT. A compositionally biased stretch (basic and acidic residues) spans 840–849; it reads VEEQHRKSEE. The segment at 840 to 893 is disordered; the sequence is VEEQHRKSEEVPMDFQHQSASSPSEQAQTPRVGRNEPCPCGSGKKYKQCHGKLA. The segment covering 855 to 868 has biased composition (polar residues); that stretch reads QHQSASSPSEQAQT. The Zn(2+) site is built by Cys877, Cys879, Cys888, and His889. The segment covering 883 to 893 has biased composition (basic residues); the sequence is KKYKQCHGKLA.

Belongs to the SecA family. As to quaternary structure, monomer and homodimer. Part of the essential Sec protein translocation apparatus which comprises SecA, SecYEG and auxiliary proteins SecDF-YajC and YidC. Requires Zn(2+) as cofactor.

The protein localises to the cell inner membrane. Its subcellular location is the cytoplasm. It catalyses the reaction ATP + H2O + cellular proteinSide 1 = ADP + phosphate + cellular proteinSide 2.. Functionally, part of the Sec protein translocase complex. Interacts with the SecYEG preprotein conducting channel. Has a central role in coupling the hydrolysis of ATP to the transfer of proteins into and across the cell membrane, serving both as a receptor for the preprotein-SecB complex and as an ATP-driven molecular motor driving the stepwise translocation of polypeptide chains across the membrane. The protein is Protein translocase subunit SecA of Colwellia psychrerythraea (strain 34H / ATCC BAA-681) (Vibrio psychroerythus).